The primary structure comprises 608 residues: Isocitrate dehydrogenase kinase/phosphatase (608 aa).

ATP-binding positions include 327–333 (APGIKGL) and Lys348. Residue Asp383 is part of the active site. The disordered stretch occupies residues 589 to 608 (FDSTPDAGDGDSAGDAQRAA).

It belongs to the AceK family.

The protein localises to the cytoplasm. It carries out the reaction L-seryl-[isocitrate dehydrogenase] + ATP = O-phospho-L-seryl-[isocitrate dehydrogenase] + ADP + H(+). In terms of biological role, bifunctional enzyme which can phosphorylate or dephosphorylate isocitrate dehydrogenase (IDH) on a specific serine residue. This is a regulatory mechanism which enables bacteria to bypass the Krebs cycle via the glyoxylate shunt in response to the source of carbon. When bacteria are grown on glucose, IDH is fully active and unphosphorylated, but when grown on acetate or ethanol, the activity of IDH declines drastically concomitant with its phosphorylation. This is Isocitrate dehydrogenase kinase/phosphatase from Burkholderia ambifaria (strain MC40-6).